We begin with the raw amino-acid sequence, 432 residues long: Amino-acid acetyltransferase (432 aa).

Residues 286 to 425 (ESLREATIED…ASLYNYQRNS (140 aa)) form the N-acetyltransferase domain.

It belongs to the acetyltransferase family. ArgA subfamily.

It is found in the cytoplasm. It catalyses the reaction L-glutamate + acetyl-CoA = N-acetyl-L-glutamate + CoA + H(+). The protein operates within amino-acid biosynthesis; L-arginine biosynthesis; N(2)-acetyl-L-ornithine from L-glutamate: step 1/4. The polypeptide is Amino-acid acetyltransferase (Ectopseudomonas mendocina (strain ymp) (Pseudomonas mendocina)).